Here is a 187-residue protein sequence, read N- to C-terminus: Major allergen Equ c 1 (187 aa).

Residues 1–15 constitute a signal peptide (or 16, or 21); that stretch reads MKLLLLCLGLILVCA. 2 N-linked (GlcNAc...) asparagine glycosylation sites follow: N53 and N68. The cysteines at positions 83 and 176 are disulfide-linked.

This sequence belongs to the calycin superfamily. Lipocalin family. In terms of assembly, homodimer. Several N-terminal ends may be due to cleavage by signal peptidase at different sites or may be generated by proteolytic processing of the secreted protein. In terms of processing, analysis of the sugar composition shows the presence of GalNAc, Gal, NeuAc, GlcNAc, and Man. May be also O-glycosylated. As to expression, expressed in liver and in sublingual and submaxillary salivary glands. Highly concentrated in secretory fluid such as saliva and urine as well as in hair dandruff extract.

It localises to the secreted. The polypeptide is Major allergen Equ c 1 (Equus caballus (Horse)).